The following is a 595-amino-acid chain: Aspartate--tRNA(Asp/Asn) ligase (595 aa).

Residue glutamate 177 coordinates L-aspartate. The aspartate stretch occupies residues 201–204 (QQFK). Arginine 223 contributes to the L-aspartate binding site. ATP is bound by residues 223 to 225 (RDE) and glutamine 232. Histidine 455 contributes to the L-aspartate binding site. Glutamate 489 lines the ATP pocket. Residue arginine 496 participates in L-aspartate binding. 542-545 (GLDR) serves as a coordination point for ATP.

Belongs to the class-II aminoacyl-tRNA synthetase family. Type 1 subfamily. As to quaternary structure, homodimer.

It is found in the cytoplasm. It catalyses the reaction tRNA(Asx) + L-aspartate + ATP = L-aspartyl-tRNA(Asx) + AMP + diphosphate. In terms of biological role, aspartyl-tRNA synthetase with relaxed tRNA specificity since it is able to aspartylate not only its cognate tRNA(Asp) but also tRNA(Asn). Reaction proceeds in two steps: L-aspartate is first activated by ATP to form Asp-AMP and then transferred to the acceptor end of tRNA(Asp/Asn). The chain is Aspartate--tRNA(Asp/Asn) ligase from Opitutus terrae (strain DSM 11246 / JCM 15787 / PB90-1).